A 262-amino-acid polypeptide reads, in one-letter code: GTP cyclohydrolase FolE2 (262 aa).

The protein belongs to the GTP cyclohydrolase IV family.

It carries out the reaction GTP + H2O = 7,8-dihydroneopterin 3'-triphosphate + formate + H(+). It participates in cofactor biosynthesis; 7,8-dihydroneopterin triphosphate biosynthesis; 7,8-dihydroneopterin triphosphate from GTP: step 1/1. Its function is as follows. Converts GTP to 7,8-dihydroneopterin triphosphate. In Dichelobacter nodosus (strain VCS1703A), this protein is GTP cyclohydrolase FolE2.